A 243-amino-acid polypeptide reads, in one-letter code: Pyridoxine 5'-phosphate synthase (243 aa).

A 3-amino-2-oxopropyl phosphate-binding site is contributed by asparagine 9. 11-12 serves as a coordination point for 1-deoxy-D-xylulose 5-phosphate; that stretch reads DH. A 3-amino-2-oxopropyl phosphate-binding site is contributed by arginine 20. The active-site Proton acceptor is the histidine 45. 1-deoxy-D-xylulose 5-phosphate-binding residues include arginine 47 and histidine 52. Glutamate 72 functions as the Proton acceptor in the catalytic mechanism. Threonine 102 is a 1-deoxy-D-xylulose 5-phosphate binding site. Histidine 193 (proton donor) is an active-site residue. Residues glycine 194 and 215–216 each bind 3-amino-2-oxopropyl phosphate; that span reads GH.

This sequence belongs to the PNP synthase family. Homooctamer; tetramer of dimers.

The protein resides in the cytoplasm. The catalysed reaction is 3-amino-2-oxopropyl phosphate + 1-deoxy-D-xylulose 5-phosphate = pyridoxine 5'-phosphate + phosphate + 2 H2O + H(+). It functions in the pathway cofactor biosynthesis; pyridoxine 5'-phosphate biosynthesis; pyridoxine 5'-phosphate from D-erythrose 4-phosphate: step 5/5. In terms of biological role, catalyzes the complicated ring closure reaction between the two acyclic compounds 1-deoxy-D-xylulose-5-phosphate (DXP) and 3-amino-2-oxopropyl phosphate (1-amino-acetone-3-phosphate or AAP) to form pyridoxine 5'-phosphate (PNP) and inorganic phosphate. This is Pyridoxine 5'-phosphate synthase from Pseudoalteromonas translucida (strain TAC 125).